We begin with the raw amino-acid sequence, 92 residues long: DNA-binding protein HU 1 (92 aa).

The residue at position 4 (T4) is a Phosphothreonine.

This sequence belongs to the bacterial histone-like protein family. In terms of assembly, homodimer. As to quaternary structure, (Microbial infection) Interacts with Bacillus phage SP01 Gp46; the interaction replaces dsDNA from the hbs-DNA complex.

It is found in the cytoplasm. The protein localises to the nucleoid. In terms of biological role, histone-like DNA-binding protein which introduces negative supercoils in relaxed plasmid DNA in the presence of topoisomerase I. There are at least 20,000 monomers/cell. Capable of wrapping DNA to stabilize it, and thus to prevent its denaturation under extreme environmental conditions. Binds evenly across chromosome, does not display a preference for AT content. Binds ss- and dsDNA in a sequence non-specific manner; 8 nucleotides are sufficient to bind protein. The polypeptide is DNA-binding protein HU 1 (Bacillus subtilis (strain 168)).